A 139-amino-acid chain; its full sequence is Small ribosomal subunit protein uS19 (139 aa).

Belongs to the universal ribosomal protein uS19 family.

In terms of biological role, protein S19 forms a complex with S13 that binds strongly to the 16S ribosomal RNA. This chain is Small ribosomal subunit protein uS19, found in Methanoregula boonei (strain DSM 21154 / JCM 14090 / 6A8).